A 223-amino-acid polypeptide reads, in one-letter code: Adenylate kinase (223 aa).

10-15 (GSGKGT) lines the ATP pocket. The segment at 30–59 (ESGAIFREHIGGGTELGMKAKGYIDKGELV) is NMP. AMP is bound by residues S31, R36, 57–59 (ELV), 84–87 (GFPR), and Q91. The interval 125–164 (GRRLCANDPNHPNNIFIDAIKPNGDKCRVCGGDLKTRSDD) is LID. Position 126 (R126) interacts with ATP. AMP is bound by residues R161 and R173. G209 lines the ATP pocket.

Belongs to the adenylate kinase family. As to quaternary structure, monomer.

Its subcellular location is the cytoplasm. It carries out the reaction AMP + ATP = 2 ADP. It participates in purine metabolism; AMP biosynthesis via salvage pathway; AMP from ADP: step 1/1. Functionally, catalyzes the reversible transfer of the terminal phosphate group between ATP and AMP. Plays an important role in cellular energy homeostasis and in adenine nucleotide metabolism. In Solidesulfovibrio magneticus (strain ATCC 700980 / DSM 13731 / RS-1) (Desulfovibrio magneticus), this protein is Adenylate kinase.